Reading from the N-terminus, the 538-residue chain is Chaperonin GroEL (538 aa).

ATP-binding positions include 29–32, 86–90, G413, 479–481, and D495; these read TLGP, DGTTT, and DAL.

It belongs to the chaperonin (HSP60) family. Forms a cylinder of 14 subunits composed of two heptameric rings stacked back-to-back. Interacts with the co-chaperonin GroES.

The protein localises to the cytoplasm. The catalysed reaction is ATP + H2O + a folded polypeptide = ADP + phosphate + an unfolded polypeptide.. Functionally, together with its co-chaperonin GroES, plays an essential role in assisting protein folding. The GroEL-GroES system forms a nano-cage that allows encapsulation of the non-native substrate proteins and provides a physical environment optimized to promote and accelerate protein folding. The polypeptide is Chaperonin GroEL (Fervidobacterium nodosum (strain ATCC 35602 / DSM 5306 / Rt17-B1)).